Reading from the N-terminus, the 98-residue chain is Citrate lyase acyl carrier protein (98 aa).

O-(phosphoribosyl dephospho-coenzyme A)serine is present on serine 14.

Belongs to the CitD family. As to quaternary structure, oligomer with a subunit composition of (alpha,beta,gamma)6.

It is found in the cytoplasm. Covalent carrier of the coenzyme of citrate lyase. The polypeptide is Citrate lyase acyl carrier protein (Shigella boydii serotype 18 (strain CDC 3083-94 / BS512)).